Reading from the N-terminus, the 579-residue chain is CTP synthase (579 aa).

Positions 1–281 are amidoligase domain; it reads MPALRKHPQT…DAYVVRRLNL (281 aa). Residue Ser23 coordinates CTP. Ser23 is a binding site for UTP. Residues 24-29 and Asp81 each bind ATP; that span reads SLGKGL. Asp81 and Glu155 together coordinate Mg(2+). CTP-binding positions include 162–164, 202–207, and Lys238; these read DIE and KTKPTQ. Residues 202–207 and Lys238 contribute to the UTP site; that span reads KTKPTQ. In terms of domain architecture, Glutamine amidotransferase type-1 spans 306–554; that stretch reads RIALVGKYID…IGAALDYKAA (249 aa). Gly369 is an L-glutamine binding site. Cys396 serves as the catalytic Nucleophile; for glutamine hydrolysis. Residues 397 to 400, Glu419, and Arg480 each bind L-glutamine; that span reads LGLQ. Active-site residues include His527 and Glu529.

It belongs to the CTP synthase family. In terms of assembly, homotetramer.

It catalyses the reaction UTP + L-glutamine + ATP + H2O = CTP + L-glutamate + ADP + phosphate + 2 H(+). The catalysed reaction is L-glutamine + H2O = L-glutamate + NH4(+). It carries out the reaction UTP + NH4(+) + ATP = CTP + ADP + phosphate + 2 H(+). The protein operates within pyrimidine metabolism; CTP biosynthesis via de novo pathway; CTP from UDP: step 2/2. Its activity is regulated as follows. Allosterically activated by GTP, when glutamine is the substrate; GTP has no effect on the reaction when ammonia is the substrate. The allosteric effector GTP functions by stabilizing the protein conformation that binds the tetrahedral intermediate(s) formed during glutamine hydrolysis. Inhibited by the product CTP, via allosteric rather than competitive inhibition. Catalyzes the ATP-dependent amination of UTP to CTP with either L-glutamine or ammonia as the source of nitrogen. Regulates intracellular CTP levels through interactions with the four ribonucleotide triphosphates. The sequence is that of CTP synthase from Mycobacterium sp. (strain KMS).